Reading from the N-terminus, the 67-residue chain is LPS-assembly lipoprotein LptM (67 aa).

Residues 1-19 form the signal peptide; the sequence is MKNVFKALTVLLTLFSLTG. C20 is lipidated: N-palmitoyl cysteine. C20 carries S-diacylglycerol cysteine lipidation. Residues 26-67 are disordered; it reads LYFPPADKNAPPPTKPVETQTQSTVPDKNDRATGDGPSQVNY. Polar residues predominate over residues 42 to 51; sequence VETQTQSTVP.

Belongs to the LptM family. Interacts with the outer membrane embedded portion of the LPS translocon formed by LptD and LptE (LptDE).

Its subcellular location is the cell outer membrane. Functionally, component of the lipopolysaccharide (LPS) transport (Lpt) pathway that promotes efficient assembly of the outer membrane LPS translocon (LptDE) by the BAM complex. Facilitates oxidative maturation of LptD by stabilizing a conformation of the LPS translocon in which LptD can efficiently acquire native disulfide bonds, thereby activating the LPS translocon. In Escherichia coli O157:H7, this protein is LPS-assembly lipoprotein LptM.